A 361-amino-acid chain; its full sequence is Mannose-1-phosphate guanylyltransferase 1 (361 aa).

GDP-alpha-D-mannose contacts are provided by L6 and V7. Diphosphate contacts are provided by G9, G11, T12, R13, and K23. Residues G85, N109, D111, G146, and N173 each contribute to the GDP-alpha-D-mannose site.

Belongs to the transferase hexapeptide repeat family. In terms of assembly, interacts in vitro with CSN5A and CSN5B, but in planta only with CSN5B, which targets CYT1 for degradation in the dark by the 26S proteasome. Forms homodimers in the unliganded structure. The product-bound structure is composed of six dimers that form a dodecameric assembly.

It is found in the cytoplasm. The protein resides in the nucleus. The catalysed reaction is alpha-D-mannose 1-phosphate + GTP + H(+) = GDP-alpha-D-mannose + diphosphate. It participates in nucleotide-sugar biosynthesis; GDP-alpha-D-mannose biosynthesis; GDP-alpha-D-mannose from alpha-D-mannose 1-phosphate (GTP route): step 1/1. In terms of biological role, essential protein during embryogenesis. Catalyzes a reaction of the Smirnoff-Wheeler pathway, the major route to ascorbate biosynthesis in plants. Plays an essential role in plant growth and development and cell-wall architecture. Provides GDP-mannose, used for cell wall carbohydrate biosynthesis, protein N-glycosylation, as well as for the biosynthesis of the antioxidant ascorbate. The chain is Mannose-1-phosphate guanylyltransferase 1 from Arabidopsis thaliana (Mouse-ear cress).